The sequence spans 206 residues: Holliday junction branch migration complex subunit RuvA (206 aa).

The domain I stretch occupies residues 1 to 63 (MIASLRGTVI…EDAMKLYGFI (63 aa)). Positions 64–142 (DNESREMFSV…AFAAGVVDEA (79 aa)) are domain II. The flexible linker stretch occupies residues 143 to 153 (GEQISLPNANI). Residues 154 to 206 (ASEVVVEQVSQALVGLGFSEKQSDDAVSFVLAADPSLDTSGALRAALAKLSGK) form a domain III region.

Belongs to the RuvA family. Homotetramer. Forms an RuvA(8)-RuvB(12)-Holliday junction (HJ) complex. HJ DNA is sandwiched between 2 RuvA tetramers; dsDNA enters through RuvA and exits via RuvB. An RuvB hexamer assembles on each DNA strand where it exits the tetramer. Each RuvB hexamer is contacted by two RuvA subunits (via domain III) on 2 adjacent RuvB subunits; this complex drives branch migration. In the full resolvosome a probable DNA-RuvA(4)-RuvB(12)-RuvC(2) complex forms which resolves the HJ.

Its subcellular location is the cytoplasm. In terms of biological role, the RuvA-RuvB-RuvC complex processes Holliday junction (HJ) DNA during genetic recombination and DNA repair, while the RuvA-RuvB complex plays an important role in the rescue of blocked DNA replication forks via replication fork reversal (RFR). RuvA specifically binds to HJ cruciform DNA, conferring on it an open structure. The RuvB hexamer acts as an ATP-dependent pump, pulling dsDNA into and through the RuvAB complex. HJ branch migration allows RuvC to scan DNA until it finds its consensus sequence, where it cleaves and resolves the cruciform DNA. The sequence is that of Holliday junction branch migration complex subunit RuvA from Corynebacterium glutamicum (strain R).